We begin with the raw amino-acid sequence, 127 residues long: Insulin-like growth factor 3.L (127 aa).

An N-terminal signal peptide occupies residues 1 to 49; it reads MPVTAMCLQDSKKLKKAKLTRKKVTPFPFSRMVLCLSLVFTLYVEATNA. Residues 49–80 are b; it reads ARCLRPRSKELLCGSELVDILQFICGPTGFYV. 3 disulfide bridges follow: C61-C99, C73-C112, and C98-C103. The c stretch occupies residues 81–92; the sequence is SKGASFRNRNRP. Residues 93–113 form an a region; the sequence is GIVEECCFCGCSVAILESYCA. The interval 114 to 121 is d; sequence APVTNFTG. The propeptide at 122–127 is e peptide; sequence REEQKS.

Belongs to the insulin family.

It is found in the secreted. In terms of biological role, the insulin-like growth factors, isolated from plasma, are structurally and functionally related to insulin but have a much higher growth-promoting activity. Promotes anterior neural development. The protein is Insulin-like growth factor 3.L of Xenopus laevis (African clawed frog).